The sequence spans 481 residues: Surface lipoprotein assembly modifier 2 (481 aa).

Positions 1–24 (MKNGVKQLFLLSLIGLSLTNVAWA) are cleaved as a signal peptide. The interval 24-192 (AEVARPKNDT…QYLLTLNQRN (169 aa)) is N-terminal domain. Residues 193 to 481 (QWIWQVGLNF…RIYLEIGKIF (289 aa)) are C-terminal probable beta barrel. 14 beta stranded membrane passes run 194–204 (WIWQVGLNFLN), 223–243 (AWEK…KKWP), 248–257 (FFSKTMFNGN), 271–281 (TVRIGGGLGYQ), 285–295 (VEVSLFPFQEK), 315–325 (LGIRLENVDWL), 329–339 (WQISTALEYGE), 353–363 (YFVSSTLFYLP), 368–377 (FWFVGMDFHR), 390–399 (KTLRLGWGQD), 404–414 (ISSRLTFSYAN), 432–441 (YTTTITLWHR), 448–458 (LTPKLSWDYQK), and 471–481 (NRIYLEIGKIF).

It belongs to the Slam family.

The protein resides in the cell outer membrane. Its function is as follows. Required for correct export to the cell surface of some cell outer membrane lipoproteins. The protein is Surface lipoprotein assembly modifier 2 of Haemophilus influenzae (strain ATCC 51907 / DSM 11121 / KW20 / Rd).